The sequence spans 155 residues: Large ribosomal subunit protein bL9c (155 aa).

The protein belongs to the bacterial ribosomal protein bL9 family.

It localises to the plastid. The protein localises to the chloroplast. Functionally, binds to the 23S rRNA. This chain is Large ribosomal subunit protein bL9c, found in Porphyra purpurea (Red seaweed).